The following is a 284-amino-acid chain: Phosphonates import ATP-binding protein PhnC 2 (284 aa).

In terms of domain architecture, ABC transporter spans 5–253 (IEVRGLSKSF…MLRDLYGTEA (249 aa)). 38-45 (GASGSGKS) is a binding site for ATP.

This sequence belongs to the ABC transporter superfamily. Phosphonates importer (TC 3.A.1.9.1) family. As to quaternary structure, the complex is composed of two ATP-binding proteins (PhnC), two transmembrane proteins (PhnE) and a solute-binding protein (PhnD).

The protein resides in the cell inner membrane. It carries out the reaction phosphonate(out) + ATP + H2O = phosphonate(in) + ADP + phosphate + H(+). In terms of biological role, part of the ABC transporter complex PhnCDE involved in phosphonates import. Responsible for energy coupling to the transport system. This is Phosphonates import ATP-binding protein PhnC 2 from Cupriavidus necator (strain ATCC 17699 / DSM 428 / KCTC 22496 / NCIMB 10442 / H16 / Stanier 337) (Ralstonia eutropha).